The chain runs to 93 residues: UPF0473 protein RBAM_024480 (93 aa).

The protein belongs to the UPF0473 family.

The chain is UPF0473 protein RBAM_024480 from Bacillus velezensis (strain DSM 23117 / BGSC 10A6 / LMG 26770 / FZB42) (Bacillus amyloliquefaciens subsp. plantarum).